The chain runs to 260 residues: Global transcriptional regulator CodY (260 aa).

The segment at 1 to 159 (MPNLLEKTRK…SSTVVGIQLL (159 aa)) is GAF domain. The segment at residues 207–226 (ASVIADRIGITRSVIVNALR) is a DNA-binding region (H-T-H motif).

It belongs to the CodY family.

It is found in the cytoplasm. Functionally, DNA-binding global transcriptional regulator which is involved in the adaptive response to starvation and acts by directly or indirectly controlling the expression of numerous genes in response to nutrient availability. During rapid exponential growth, CodY is highly active and represses genes whose products allow adaptation to nutrient depletion. The protein is Global transcriptional regulator CodY of Streptococcus pyogenes serotype M1.